Consider the following 358-residue polypeptide: uncharacterized protein (358 aa).

The protein belongs to the serpin family. Poxviruses subfamily.

This is an uncharacterized protein from Fowlpox virus (strain NVSL) (FPV).